An 88-amino-acid chain; its full sequence is Small ribosomal subunit protein bS16c (88 aa).

It belongs to the bacterial ribosomal protein bS16 family.

The protein resides in the plastid. It is found in the chloroplast. The protein is Small ribosomal subunit protein bS16c of Jasminum nudiflorum (Winter jasmine).